Consider the following 107-residue polypeptide: Toluene 1,2-dioxygenase system ferredoxin subunit (107 aa).

A Rieske domain is found at 4 to 99; the sequence is TYILRQGDLP…IKVEGDEVHV (96 aa). The [2Fe-2S] cluster site is built by Cys43, His45, Cys62, and His65.

The protein belongs to the bacterial ring-hydroxylating dioxygenase ferredoxin component family. In terms of assembly, this dioxygenase system consists of four proteins: the two subunits of the hydroxylase component (todC1 and todC2), a ferredoxin (TodB) and a ferredoxin reductase (TodA).

It functions in the pathway xenobiotic degradation; toluene degradation. Functionally, this protein seems to be a 2Fe-2S ferredoxin. The protein is Toluene 1,2-dioxygenase system ferredoxin subunit (todB) of Pseudomonas putida (strain ATCC 700007 / DSM 6899 / JCM 31910 / BCRC 17059 / LMG 24140 / F1).